Consider the following 260-residue polypeptide: MLSITRRLMGTDVRSRLLLSSLNGDMPGALLLLRQQQQASMDVELLHTVLARATALAHVETIAYVWYHHVQPRRLAVEGRLLCDMAGVALHQDKLFLPAQFLQHHQTMGLGRGTSASASAEAQAVEFELRRVKVEAFARGTMHSTALSEKWKVFLQEMDTLPGQPPLRLRDFPQLARAVGVAAQLQQPQEQAAALALFGRQPLVVKNEWSLPLLLSAVLWHVPGPAQARRVLAEFRQCYRGLPLTDAEVVIKRRGFEIDT.

A mitochondrion-targeting transit peptide spans 1-8 (MLSITRRL).

It localises to the mitochondrion inner membrane. In terms of biological role, required for expression of the mitochondrial gene for cytochrome c oxidase subunit 3 (COX3). PET122 seems to work by directly interacting with the small ribosomal subunit to promote translation initiation on the COX3 mRNA. The sequence is that of Protein PET122, mitochondrial (PET122) from Saccharomyces bayanus (Yeast).